Here is a 408-residue protein sequence, read N- to C-terminus: Solute carrier family 35 member F1 (408 aa).

Residues 1-20 form a disordered region; it reads MIPPEPPQPQLQPPPPPAPP. 10 helical membrane passes run 60-80, 94-114, 129-147, 159-179, 186-206, 221-241, 247-267, 284-304, 311-331, and 335-355; these read MLIS…IGLT, VFQS…TLAV, WWKY…YLVV, QLLD…FLLI, FIGI…DVLV, LLVL…ESII, VEFL…QLAI, LLYV…PVVI, SVNL…LFLF, and FSGL…LYSS.

The protein belongs to the SLC35F solute transporter family.

It localises to the cytoplasmic vesicle. Its subcellular location is the secretory vesicle. The protein resides in the synaptic vesicle membrane. Functionally, putative solute transporter. This Mus musculus (Mouse) protein is Solute carrier family 35 member F1 (Slc35f1).